The sequence spans 178 residues: uncharacterized protein (178 aa).

The tract at residues 64-103 (GVSDNTNKTTAKDNVSDKSSENEVAQPKQVTPPVDATGNT) is disordered. Positions 73–84 (TAKDNVSDKSSE) are enriched in basic and acidic residues.

This is an uncharacterized protein from Acidianus sp. F28 (AFV-2).